The sequence spans 689 residues: Elongation factor G (689 aa).

The 275-residue stretch at 9–283 folds into the tr-type G domain; sequence AKFRNIGIMA…AIIEFMPSPL (275 aa). Residues 18–25, 82–86, and 136–139 contribute to the GTP site; these read AHIDAGKT, DTPGH, and NKMD.

Belongs to the TRAFAC class translation factor GTPase superfamily. Classic translation factor GTPase family. EF-G/EF-2 subfamily.

It is found in the cytoplasm. Catalyzes the GTP-dependent ribosomal translocation step during translation elongation. During this step, the ribosome changes from the pre-translocational (PRE) to the post-translocational (POST) state as the newly formed A-site-bound peptidyl-tRNA and P-site-bound deacylated tRNA move to the P and E sites, respectively. Catalyzes the coordinated movement of the two tRNA molecules, the mRNA and conformational changes in the ribosome. This Clostridium botulinum (strain ATCC 19397 / Type A) protein is Elongation factor G.